Reading from the N-terminus, the 173-residue chain is Alpha-crystallin A chain (173 aa).

Met-1 is subject to N-acetylmethionine. Residues 1–63 (MDIAIQHPWF…RTVLDSGISE (63 aa)) form a required for complex formation with BFSP1 and BFSP2 region. Position 6 is a deamidated glutamine; partial (Gln-6). Lys-11 carries N-linked (Glc) (glycation) lysine glycosylation. Ser-45 is modified (phosphoserine). Gln-50 bears the Deamidated glutamine; partial mark. One can recognise a sHSP domain in the interval 52 to 162 (LFRTVLDSGI…GHSERAIPVS (111 aa)). Residue Lys-70 is modified to N6-acetyllysine. Lys-78 carries N-linked (Glc) (glycation) lysine glycosylation. The residue at position 90 (Gln-90) is a Deamidated glutamine; partial. An N6-acetyllysine modification is found at Lys-99. His-100 is a binding site for Zn(2+). Residue Asn-101 is modified to Deamidated asparagine; partial. Zn(2+) contacts are provided by Glu-102 and His-107. Ser-122 is subject to Phosphoserine. Deamidated asparagine; partial is present on Asn-123. The segment at 144–173 (PKIPSGVDAGHSERAIPVSREEKPSSAPSS) is disordered. Residues 153–167 (GHSERAIPVSREEKP) are compositionally biased toward basic and acidic residues. His-154 lines the Zn(2+) pocket. An important for oligomerization region spans residues 157–163 (RAIPVSR). Ser-162 is a glycosylation site (O-linked (GlcNAc) serine).

Belongs to the small heat shock protein (HSP20) family. Heteromer composed of three CRYAA and one CRYAB subunits. Inter-subunit bridging via zinc ions enhances stability, which is crucial as there is no protein turn over in the lens. Can also form homodimers and homotetramers (dimers of dimers) which serve as the building blocks of homooligomers. Within homooligomers, the zinc-binding motif is created from residues of 3 different molecules. His-100 and Glu-102 from one molecule are ligands of the zinc ion, and His-107 and His-154 residues from additional molecules complete the site with tetrahedral coordination geometry. Part of a complex required for lens intermediate filament formation composed of BFSP1, BFSP2 and CRYAA. Acetylation at Lys-70 may increase chaperone activity. In terms of processing, undergoes age-dependent proteolytical cleavage at the C-terminus.

It localises to the cytoplasm. The protein resides in the nucleus. Its function is as follows. Contributes to the transparency and refractive index of the lens. Acts as a chaperone, preventing aggregation of various proteins under a wide range of stress conditions. Required for the correct formation of lens intermediate filaments as part of a complex composed of BFSP1, BFSP2 and CRYAA. In Bos taurus (Bovine), this protein is Alpha-crystallin A chain (CRYAA).